The primary structure comprises 478 residues: Monocarboxylate transporter 2 (478 aa).

Residues 1 to 15 (MPPMPSAPPVHPPPD) lie on the Cytoplasmic side of the membrane. A helical membrane pass occupies residues 16-36 (GGWGWIVVGAAFISIGFSYAF). Topologically, residues 37-59 (PKAVTVFFKEIQQIFHTTYSEIA) are extracellular. A helical transmembrane segment spans residues 60–80 (WISSIMLAVMYAGGPVSSVLV). Over 81 to 89 (NKYGSRPVV) the chain is Cytoplasmic. A helical transmembrane segment spans residues 90–110 (IAGGLLCCLGMVLASFSSSVV). At 111-115 (QLYLT) the chain is on the extracellular side. Residues 116-136 (MGFITGLGLAFNLQPALTIIG) form a helical membrane-spanning segment. Topologically, residues 137–148 (KYFYRKRPMANG) are cytoplasmic. Residues 149–169 (LAMAGSPVFLSSLAPFNQYLF) form a helical membrane-spanning segment. Residues 170–173 (NTFG) are Extracellular-facing. A helical transmembrane segment spans residues 174–194 (WKGSFLILGSLLLNACVAGSL). Residues 195–246 (MRPLGPNQTTSKSKNKTGKTEDDSSPKKIKTKKSTWEKVNKYLDFSLFKHRG) lie on the Cytoplasmic side of the membrane. The tract at residues 200 to 224 (PNQTTSKSKNKTGKTEDDSSPKKIK) is disordered. Residues 247 to 267 (FLIYLSGNVIMFLGFFAPIIF) form a helical membrane-spanning segment. At 268-282 (LAPYAKDQGIDEYSA) the chain is on the extracellular side. The helical transmembrane segment at 283–303 (AFLLSVMAFVDMFARPSVGLI) threads the bilayer. Residues 304–312 (ANSKYIRPR) are Cytoplasmic-facing. A helical membrane pass occupies residues 313 to 333 (IQYFFSFAIMFNGVCHLLCPL). The Extracellular portion of the chain corresponds to 334 to 338 (AQDYT). Residues 339–359 (SLVLYAVFFGLGFGSVSSVLF) form a helical membrane-spanning segment. The Cytoplasmic segment spans residues 360–373 (ETLMDLVGAPRFSS). The chain crosses the membrane as a helical span at residues 374 to 394 (AVGLVTIVECGPVLLGPPLAG). Over 395-406 (KLVDLTGEYKYM) the chain is Extracellular. Residues 407 to 427 (YMSCGAIVVAASVWLLIGNAI) traverse the membrane as a helical segment. Residues 428-478 (NYRLLAKERKEENARQKTRESEPLSKSKHSEDVNVKVSNAQSVTSERETNI) are Cytoplasmic-facing. Basic and acidic residues predominate over residues 437-461 (KEENARQKTRESEPLSKSKHSEDVN). The tract at residues 437-478 (KEENARQKTRESEPLSKSKHSEDVNVKVSNAQSVTSERETNI) is disordered.

This sequence belongs to the major facilitator superfamily. Monocarboxylate porter (TC 2.A.1.13) family. In terms of assembly, homodimer. Interacts with GRID2IP. Interacts with EMB; interaction mediates SLC16A7 targeting to the plasma membrane. Interacts with isoform 2 of BSG. Detected in heart and in blood lymphocytes and monocytes (at protein level). High expression in testis, moderate to low in spleen, heart, kidney, pancreas, skeletal muscle, brain and leukocyte. Restricted expression in normal tissues, but widely expressed in cancer cells.

The protein resides in the cell membrane. It localises to the basolateral cell membrane. The protein localises to the cytoplasm. The catalysed reaction is pyruvate(out) + H(+)(out) = pyruvate(in) + H(+)(in). It catalyses the reaction 3-methyl-2-oxobutanoate(out) + H(+)(out) = 3-methyl-2-oxobutanoate(in) + H(+)(in). It carries out the reaction (S)-lactate(in) + H(+)(in) = (S)-lactate(out) + H(+)(out). The enzyme catalyses acetoacetate(out) + H(+)(out) = acetoacetate(in) + H(+)(in). The catalysed reaction is (R)-3-hydroxybutanoate(out) + H(+)(out) = (R)-3-hydroxybutanoate(in) + H(+)(in). It catalyses the reaction 4-methyl-2-oxopentanoate(out) + H(+)(out) = 4-methyl-2-oxopentanoate(in) + H(+)(in). It carries out the reaction (S)-3-hydroxybutanoate(out) + H(+)(out) = (S)-3-hydroxybutanoate(in) + H(+)(in). Transport activity exhibits steep dependence on substrate concentration. Substrate concentration sensitivity of SLC16A7 arises from the strong inter-subunit cooperativity of the SLC16A7 dimer during transport. Inhibited by AR-C155858. In terms of biological role, proton-coupled monocarboxylate symporter. Catalyzes the rapid transport across the plasma membrane of monocarboxylates such as L-lactate, pyruvate and ketone bodies, acetoacetate, beta-hydroxybutyrate and acetate. Dimerization is functionally required and both subunits work cooperatively in transporting substrate. The sequence is that of Monocarboxylate transporter 2 from Homo sapiens (Human).